Consider the following 395-residue polypeptide: Flagellin D (395 aa).

This sequence belongs to the bacterial flagellin family.

Its subcellular location is the secreted. The protein resides in the bacterial flagellum. Its function is as follows. Flagellin is the subunit protein which polymerizes to form the filaments of bacterial flagella. The sequence is that of Flagellin D (flaD) from Rhizobium meliloti (Ensifer meliloti).